Here is a 269-residue protein sequence, read N- to C-terminus: Eukaryotic translation initiation factor 3 subunit G-1 (269 aa).

The region spanning 188-266 (AAIRISNLSE…LILSVEWSKP (79 aa)) is the RRM domain.

It belongs to the eIF-3 subunit G family. Component of the eukaryotic translation initiation factor 3 (eIF-3) complex. The eIF-3 complex interacts with pix.

Its subcellular location is the cytoplasm. Functionally, RNA-binding component of the eukaryotic translation initiation factor 3 (eIF-3) complex, which is involved in protein synthesis of a specialized repertoire of mRNAs and, together with other initiation factors, stimulates binding of mRNA and methionyl-tRNAi to the 40S ribosome. The eIF-3 complex specifically targets and initiates translation of a subset of mRNAs involved in cell proliferation. This subunit can bind 18S rRNA. In Drosophila mojavensis (Fruit fly), this protein is Eukaryotic translation initiation factor 3 subunit G-1.